We begin with the raw amino-acid sequence, 136 residues long: Replication enhancer (136 aa).

Belongs to the geminiviridae replication enhancer protein family. In terms of assembly, homooligomer. Interacts with the replication-associated protein (REP). Interacts with host proliferating cell nuclear antigen (PCNA). Interacts with host retinoblastoma-related protein 1 (RBR1), and may thereby deregulate the host cell cycle. Oligomerization and interaction with PCNA are necessary for optimal replication enhancement.

In terms of biological role, increases viral DNA accumulation. Enhances infectivity and symptom expression. The polypeptide is Replication enhancer (Beet curly top virus (strain California/Logan) (BCTV)).